The chain runs to 235 residues: uncharacterized protein (235 aa).

2 disordered regions span residues 20-64 (IHPN…LPIK) and 140-164 (SQFF…NFDQ). Composition is skewed to low complexity over residues 30-60 (NNNN…SNNN) and 140-161 (SQFF…NNKN). Residues 174–213 (KYMEFLSDIEQLNSDLKESKDNLESISIEMVLLETRLKGL) adopt a coiled-coil conformation.

This is an uncharacterized protein from Dictyostelium discoideum (Social amoeba).